Reading from the N-terminus, the 130-residue chain is Phosphomevalonate dehydratase small subunit (130 aa).

The active-site Proton acceptor is S62.

Belongs to the AcnX type II small subunit family. In terms of assembly, heterodimer composed of a large subunit (PMDh-L) and a small subunit (PMDh-S).

The catalysed reaction is (R)-5-phosphomevalonate = (2E)-3-methyl-5-phosphooxypent-2-enoate + H2O. The protein operates within isoprenoid biosynthesis; isopentenyl diphosphate biosynthesis via mevalonate pathway. Component of a hydro-lyase that catalyzes the dehydration of mevalonate 5-phosphate (MVA5P) to form trans-anhydromevalonate 5-phosphate (tAHMP). Involved in the archaeal mevalonate (MVA) pathway, which provides fundamental precursors for isoprenoid biosynthesis, such as isopentenyl diphosphate (IPP) and dimethylallyl diphosphate (DMAPP). This chain is Phosphomevalonate dehydratase small subunit, found in Thermococcus sibiricus (strain DSM 12597 / MM 739).